Consider the following 311-residue polypeptide: Malate dehydrogenase (311 aa).

NAD(+) is bound by residues 7-13 and aspartate 34; that span reads GAAGGIG. The substrate site is built by arginine 81 and arginine 87. Residues asparagine 94 and 117–119 contribute to the NAD(+) site; that span reads ITN. Substrate contacts are provided by asparagine 119 and arginine 153. The Proton acceptor role is filled by histidine 177. Methionine 227 is a binding site for NAD(+).

It belongs to the LDH/MDH superfamily. MDH type 1 family. Homodimer.

The catalysed reaction is (S)-malate + NAD(+) = oxaloacetate + NADH + H(+). In terms of biological role, catalyzes the reversible oxidation of malate to oxaloacetate. The chain is Malate dehydrogenase from Shewanella amazonensis (strain ATCC BAA-1098 / SB2B).